The chain runs to 382 residues: Dual-specificity RNA methyltransferase RlmN (382 aa).

Residue glutamate 96 is the Proton acceptor of the active site. The 241-residue stretch at 102–342 (QGKRGTLCVS…VRTTRGEDID (241 aa)) folds into the Radical SAM core domain. Cysteines 109 and 345 form a disulfide. Residues cysteine 116, cysteine 120, and cysteine 123 each contribute to the [4Fe-4S] cluster site. Residues 170-171 (GE), serine 202, 224-226 (SLH), and asparagine 302 each bind S-adenosyl-L-methionine. Cysteine 345 acts as the S-methylcysteine intermediate in catalysis.

The protein belongs to the radical SAM superfamily. RlmN family. The cofactor is [4Fe-4S] cluster.

The protein localises to the cytoplasm. It catalyses the reaction adenosine(2503) in 23S rRNA + 2 reduced [2Fe-2S]-[ferredoxin] + 2 S-adenosyl-L-methionine = 2-methyladenosine(2503) in 23S rRNA + 5'-deoxyadenosine + L-methionine + 2 oxidized [2Fe-2S]-[ferredoxin] + S-adenosyl-L-homocysteine. It carries out the reaction adenosine(37) in tRNA + 2 reduced [2Fe-2S]-[ferredoxin] + 2 S-adenosyl-L-methionine = 2-methyladenosine(37) in tRNA + 5'-deoxyadenosine + L-methionine + 2 oxidized [2Fe-2S]-[ferredoxin] + S-adenosyl-L-homocysteine. Functionally, specifically methylates position 2 of adenine 2503 in 23S rRNA and position 2 of adenine 37 in tRNAs. m2A2503 modification seems to play a crucial role in the proofreading step occurring at the peptidyl transferase center and thus would serve to optimize ribosomal fidelity. The protein is Dual-specificity RNA methyltransferase RlmN of Pseudomonas syringae pv. syringae (strain B728a).